The sequence spans 470 residues: D-serine/D-alanine/glycine transporter (470 aa).

Transmembrane regions (helical) follow at residues 30-50 (LIAI…KTIS), 51-71 (LAGP…FFVM), 102-122 (FTGW…VVAI), 128-148 (FWFP…LLLV), 162-182 (FWFA…GLVM), 211-231 (LSGF…IELV), 256-276 (IIMF…WSSV), 283-303 (FVEL…NFVV), 350-370 (FSCI…SVIG), 371-391 (AFTM…TIIL), 413-433 (PLGK…LVLL), and 441-461 (QALL…LFIG).

The protein belongs to the amino acid-polyamine-organocation (APC) superfamily. Amino acid transporter (AAT) (TC 2.A.3.1) family.

It is found in the cell inner membrane. It catalyses the reaction D-alanine(in) + H(+)(in) = D-alanine(out) + H(+)(out). The enzyme catalyses D-serine(out) + H(+)(out) = D-serine(in) + H(+)(in). The catalysed reaction is glycine(in) + H(+)(in) = glycine(out) + H(+)(out). It carries out the reaction D-cycloserine(in) + H(+)(in) = D-cycloserine(out) + H(+)(out). Its activity is regulated as follows. Uptake of D-serine is inhibited by D-alanine, D-cycloserine, glycine and at high concentrations of D-threonine. In terms of biological role, permease that is involved in the transport across the cytoplasmic membrane of D-alanine, D-serine and glycine. Is the only transporter of D-alanine. Transports D-serine less efficiently than DsdX. In addition, in minimal media, transports the broad spectrum antibiotic D-cycloserine into the cell. Transports D-cycloserine only in minimal media, and not in a complex medium, suggesting that CycA does not play a role in D-cycloserine transport when E.coli is grown in a complex or biologically relevant medium, probably due to competition from other CycA substrates present in the medium. The sequence is that of D-serine/D-alanine/glycine transporter (cycA) from Escherichia coli O6:H1 (strain CFT073 / ATCC 700928 / UPEC).